A 255-amino-acid polypeptide reads, in one-letter code: 1-(5-phosphoribosyl)-5-[(5-phosphoribosylamino)methylideneamino] imidazole-4-carboxamide isomerase (255 aa).

D8 functions as the Proton acceptor in the catalytic mechanism. D129 functions as the Proton donor in the catalytic mechanism.

This sequence belongs to the HisA/HisF family.

The protein localises to the cytoplasm. The catalysed reaction is 1-(5-phospho-beta-D-ribosyl)-5-[(5-phospho-beta-D-ribosylamino)methylideneamino]imidazole-4-carboxamide = 5-[(5-phospho-1-deoxy-D-ribulos-1-ylimino)methylamino]-1-(5-phospho-beta-D-ribosyl)imidazole-4-carboxamide. The protein operates within amino-acid biosynthesis; L-histidine biosynthesis; L-histidine from 5-phospho-alpha-D-ribose 1-diphosphate: step 4/9. The polypeptide is 1-(5-phosphoribosyl)-5-[(5-phosphoribosylamino)methylideneamino] imidazole-4-carboxamide isomerase (Prochlorococcus marinus (strain MIT 9515)).